Reading from the N-terminus, the 668-residue chain is MLTHKTCQARKKMQVSFVIRDAEEKQHRNGVNALQLDANNGKLYSAGRDAIIRVWNTRTDSSEKYIQSMEHHNDWVNDIVLCCNGRNLISASCDTTVKVWNAQKGFCMSTLRTHRDYVQALAYAKDREQVASAGLDKAIFLWDVNTLTALTASNNTVTTSSLTGSKDSIYSLAMNPSGTVIVSGSTENILRIWDPRTCMRRMKLRGHTENVRCLVVSPDGNQVVSGSSDGTIKVWNLGQQRCVQTIHVHKEGVWSLLMSENFQYIISGSRDRNIIVTEMRNPSNKTLVCEEQAPVLSLGYNIDKTGVWATTWNSDIRCWKLPMYDRCTLNSSGGMDAQWTQGGTEVACIKGGAAIKECAVLNDKRYIITKDSQDQVVVYDVLRVVKKEQLGAVDFEAEVKKRNKQVYIPNWFTVDLKTGMPTIVLGQEEVDCFSAWVSIEAGLPECVDPTTEIKINYGKLLLEALLEYWTPPHSIPPNEMEPDMHGNGYFQVPKHTPVIFSEVGGRTVCRLLVRDAAGDSESTLLHETAPQWVTDVVIEKNIPKFLKIPFFLQPHPQMTKPERTKKDRLVANEFIQCRKVCEHVLEKVLNAETTPSGGNANNSLQNSQSDANSEGSQLPAEERIELWCNDVVVDPNMDLRTVRHFIWKQSTDLTFQYKTKQNFNYDGK.

WD repeat units lie at residues 26–65 (QHRN…SEKY), 71–110 (HHND…CMST), 113–152 (THRD…ALTA), 164–203 (GSKD…RRMK), 206–245 (GHTE…CVQT), 248–287 (VHKE…NKTL), 290–329 (EEQA…RCTL), and 350–389 (KGGA…KKEQ). The disordered stretch occupies residues 592–616 (ETTPSGGNANNSLQNSQSDANSEGS).

Belongs to the WD repeat WDR48 family. In terms of assembly, catalytic component of the Usp12-46 deubiquitylase complex consisting of Usp12-46, Wdr20 and Uaf1; regulatory subunit that, together wtih Wdr20, stabilizes Usp12-46. The Usp12-46 deubiquitylase complex associates with arr/arrow; the interaction leads to deubiquitination and stabilization of arr/arrow.

In terms of biological role, regulatory component of the Usp12-46 deubiquitylase complex. activates deubiquitination by increasing the catalytic turnover without increasing the affinity of deubiquitinating enzymes for the substrate. The complex deubiquitylates the wg/wingless-signaling receptor arr/arrow, which stabilizes the receptor and increases its concentration at the cell surface; this enhances the sensitivity of cells to wg/wingless-signal stimulation. This increases the amplitude and spatial range of the signaling response to the wg/wingless morphogen gradient, facilitating the precise concentration-dependent regulation of its target genes. Together with Wdr20 and Usp12-46 required for wg/wingless-mediated signaling in the wing imaginal disc and for wg/wingless-dependent regulation of intestinal stem cell proliferation. This Drosophila melanogaster (Fruit fly) protein is WD repeat-containing protein 48 homolog.